The chain runs to 86 residues: Serine protease inhibitor Kazal-type 2 (86 aa).

An N-terminal signal peptide occupies residues 1 to 16 (MLRLVLLLLATDFAAS). Positions 32–86 (QFRTPDCHRFDYPVCSKHLSPVCGTDMNTYGNECTLCMKIREDGSHINIIKDEPC) constitute a Kazal-like domain. 3 cysteine pairs are disulfide-bonded: cysteine 38–cysteine 68, cysteine 46–cysteine 65, and cysteine 54–cysteine 86.

The protein resides in the secreted. The protein localises to the cytoplasmic vesicle. It is found in the secretory vesicle. It localises to the acrosome. Functionally, as a strong inhibitor of acrosin, it is required for normal spermiogenesis. It probably hinders premature activation of proacrosin and other proteases, thus preventing the cascade of events leading to spermiogenesis defects. May be involved in the regulation of serine protease-dependent germ cell apoptosis. It also inhibits trypsin. This Rattus norvegicus (Rat) protein is Serine protease inhibitor Kazal-type 2 (Spink2).